The sequence spans 82 residues: MNNSKDNPFRGAIARKARIYLREGLDCVYFLNKAGQAEPCPACTSLVFQGKTCEEHIHNNNLLSWQAVKQLEKQTPQRQSLN.

Functionally, involved in host translation shutoff without degradating host RNA. By suppressing host gene expression, facilitates the evasion from host type I interferon immune response. This is Host translation inhibitor 5b from Gallus gallus (Chicken).